We begin with the raw amino-acid sequence, 339 residues long: tRNA-splicing endonuclease (339 aa).

Residues Tyr274, His285, and Lys316 contribute to the active site.

Belongs to the tRNA-intron endonuclease family. Archaeal long subfamily. As to quaternary structure, homodimer. The cofactor is Ca(2+). It depends on Mg(2+) as a cofactor. The N-terminus is blocked.

The catalysed reaction is pretRNA = a 3'-half-tRNA molecule with a 5'-OH end + a 5'-half-tRNA molecule with a 2',3'-cyclic phosphate end + an intron with a 2',3'-cyclic phosphate and a 5'-hydroxyl terminus.. Functionally, endonuclease that removes tRNA introns. Cleaves pre-tRNA at the 5'- and 3'-splice sites to release the intron. The products are an intron and two tRNA half-molecules bearing 2',3' cyclic phosphate and 5'-OH termini. Recognizes a pseudosymmetric substrate in which 2 bulged loops of 3 bases are separated by a stem of 4 bp. The protein is tRNA-splicing endonuclease of Haloferax volcanii (strain ATCC 29605 / DSM 3757 / JCM 8879 / NBRC 14742 / NCIMB 2012 / VKM B-1768 / DS2) (Halobacterium volcanii).